Consider the following 90-residue polypeptide: MGVGGISIWQLLIVLVIILLLFGTKKLRSIGTDLGSAIKGFRNSLRDEERRDAEEAATIEHKQAHKAENPSQRQQADADFKIKSGNDEHK.

Residues 2-22 (GVGGISIWQLLIVLVIILLLF) form a helical membrane-spanning segment. Composition is skewed to basic and acidic residues over residues 45 to 68 (LRDEERRDAEEAATIEHKQAHKAE) and 76 to 90 (ADADFKIKSGNDEHK). The tract at residues 45–90 (LRDEERRDAEEAATIEHKQAHKAENPSQRQQADADFKIKSGNDEHK) is disordered.

It belongs to the TatA/E family. As to quaternary structure, the Tat system comprises two distinct complexes: a TatABC complex, containing multiple copies of TatA, TatB and TatC subunits, and a separate TatA complex, containing only TatA subunits. Substrates initially bind to the TatABC complex, which probably triggers association of the separate TatA complex to form the active translocon.

The protein resides in the cell inner membrane. Functionally, part of the twin-arginine translocation (Tat) system that transports large folded proteins containing a characteristic twin-arginine motif in their signal peptide across membranes. TatA could form the protein-conducting channel of the Tat system. The sequence is that of Sec-independent protein translocase protein TatA from Nitrosococcus oceani (strain ATCC 19707 / BCRC 17464 / JCM 30415 / NCIMB 11848 / C-107).